The sequence spans 996 residues: UPF0182 protein CE0802 (996 aa).

7 consecutive transmembrane segments (helical) span residues 19–39 (VTWIIGIIALLVLVTPLTVGF), 63–83 (IILFIVFALLAGFVTWLAGYF), 115–135 (ILIIVPIFVGLLGGLVGQRSW), 176–196 (STLLVVAFIIALVGHYLLGGI), 212–234 (GARAQLAVTAGLWMLVRVATYWL), 262–282 (KIILMVISIIVAVAFFSAIFL), and 290–310 (LAVVLLVLSSVVVGAVWPLML). The disordered stretch occupies residues 920–950 (VPDVNATEDADATTDGEDETPAAPAAPAGSE). A compositionally biased stretch (acidic residues) spans 925-939 (ATEDADATTDGEDET). Low complexity predominate over residues 940-950 (PAAPAAPAGSE).

This sequence belongs to the UPF0182 family.

Its subcellular location is the cell membrane. The sequence is that of UPF0182 protein CE0802 from Corynebacterium efficiens (strain DSM 44549 / YS-314 / AJ 12310 / JCM 11189 / NBRC 100395).